A 286-amino-acid polypeptide reads, in one-letter code: L-rhamnose-binding lectin CSL1 (286 aa).

SUEL-type lectin domains are found at residues 96 to 186 (TTCE…YICL) and 193 to 280 (TCEG…YTCL).

Functionally, L-rhamnose binding lectin. Has hemagglutinating activity towards rabbit erythrocytes, but not human type B erythrocytes. Hemagglutinating activity is inhibited by smooth-type lipopolysaccharide (LPS) from K.pneumoniae, E.coli K-235, S.flexneri 1A, A.salmonicida and S.minnesota and rough-type LPS from S.flexneri, but not by rough-type LPS from E.coli K12 and E.coli EH100. Agglutinates E.coli K12 and B.subtilis. The protein is L-rhamnose-binding lectin CSL1 of Oncorhynchus keta (Chum salmon).